Reading from the N-terminus, the 88-residue chain is Large ribosomal subunit protein eL34 (88 aa).

This sequence belongs to the eukaryotic ribosomal protein eL34 family.

In Saccharolobus solfataricus (strain ATCC 35092 / DSM 1617 / JCM 11322 / P2) (Sulfolobus solfataricus), this protein is Large ribosomal subunit protein eL34.